Reading from the N-terminus, the 470-residue chain is Cysteine--tRNA ligase (470 aa).

Residue C28 coordinates Zn(2+). The short motif at 30-40 is the 'HIGH' region element; the sequence is PTVYNYIHIGN. Residues C211, H236, and E240 each contribute to the Zn(2+) site. The 'KMSKS' region motif lies at 270 to 274; that stretch reads KMSKS. Residue K273 participates in ATP binding.

The protein belongs to the class-I aminoacyl-tRNA synthetase family. Monomer. Zn(2+) serves as cofactor.

The protein resides in the cytoplasm. The enzyme catalyses tRNA(Cys) + L-cysteine + ATP = L-cysteinyl-tRNA(Cys) + AMP + diphosphate. This chain is Cysteine--tRNA ligase, found in Enterococcus faecalis (strain ATCC 700802 / V583).